Reading from the N-terminus, the 655-residue chain is MGIFSIANQHIRFAVKLATAIVLALFVGFHFQLETPRWAVLTAAIVAAGPAFAAGGEPYSGAIRYRGFLRIIGTFIGCIAGLVIIIAMIRAPLLMILVCCIWAGFCTWISSLVRIENSYAWGLAGYTALIIVITIQPEPLLTPQFAVERCSEIVIGIVCAIMADLLFSPRSIKQEVDRELESLLVAQYQLMQLCIKHGDGEVVDKAWGDLVRRTTALQGMRSNLNMESSRWARANRRLKAINTLSLTLITQSCETYLIQNTRPELITDTFREFFDTPVETAQDVHKQLKRLRRVIAWTGERETPVTIYSWVAAATRYQLLKRGVISNTKINATEEEILQGEPEVKVESAERHHAMVNFWRTTLSCILGTLFWLWTGWTSGSGAMVMIAVVTSLAMRLPNPRMVAIDFIYGTLAALPLGLLYFLVIIPNTQQSMLLLCISLAVLGFFLGIEVQKRRLGSMGALASTINIIVLDNPMTFHFSQFLDSALGQIVGCVLAFTVILLVRDKSRDRTGRVLLNQFVSAAVSAMTTNVARRKENHLPALYQQLFLLMNKFPGDLPKFRLALTMIIAHQRLRDAPIPVNEDLSAFHRQMRRTADHVISARSDDKRRRYFGQLLEELEIYQEKLRIWQAPPQVTEPVHRLAGMLHKYQHALTDS.

The Periplasmic segment spans residues 1–12 (MGIFSIANQHIR). Residues 13–33 (FAVKLATAIVLALFVGFHFQL) form a helical membrane-spanning segment. Residues 34-37 (ETPR) are Cytoplasmic-facing. The chain crosses the membrane as a helical span at residues 38–58 (WAVLTAAIVAAGPAFAAGGEP). The Periplasmic segment spans residues 59–68 (YSGAIRYRGF). A helical membrane pass occupies residues 69-89 (LRIIGTFIGCIAGLVIIIAMI). Residues 90–92 (RAP) lie on the Cytoplasmic side of the membrane. The helical transmembrane segment at 93–113 (LLMILVCCIWAGFCTWISSLV) threads the bilayer. Over 114–120 (RIENSYA) the chain is Periplasmic. Residues 121–141 (WGLAGYTALIIVITIQPEPLL) traverse the membrane as a helical segment. Topologically, residues 142 to 151 (TPQFAVERCS) are cytoplasmic. Residues 152-172 (EIVIGIVCAIMADLLFSPRSI) form a helical membrane-spanning segment. At 173-369 (KQEVDRELES…RTTLSCILGT (197 aa)) the chain is on the periplasmic side. A helical transmembrane segment spans residues 370 to 390 (LFWLWTGWTSGSGAMVMIAVV). Residues 391-406 (TSLAMRLPNPRMVAID) lie on the Cytoplasmic side of the membrane. The helical transmembrane segment at 407 to 427 (FIYGTLAALPLGLLYFLVIIP) threads the bilayer. Residues 428 to 430 (NTQ) lie on the Periplasmic side of the membrane. Residues 431–451 (QSMLLLCISLAVLGFFLGIEV) form a helical membrane-spanning segment. At 452–458 (QKRRLGS) the chain is on the cytoplasmic side. The helical transmembrane segment at 459–479 (MGALASTINIIVLDNPMTFHF) threads the bilayer. At 480-481 (SQ) the chain is on the periplasmic side. The chain crosses the membrane as a helical span at residues 482-502 (FLDSALGQIVGCVLAFTVILL). The Cytoplasmic portion of the chain corresponds to 503-655 (VRDKSRDRTG…HKYQHALTDS (153 aa)).

Belongs to the aromatic acid exporter ArAE (TC 2.A.85) family.

The protein resides in the cell inner membrane. Forms an efflux pump with AaeA. Could function as a metabolic relief valve, allowing to eliminate certain compounds when they accumulate to high levels in the cell. In Shigella flexneri, this protein is p-hydroxybenzoic acid efflux pump subunit AaeB.